Consider the following 368-residue polypeptide: Molybdenum import ATP-binding protein ModC (368 aa).

Positions 1-231 constitute an ABC transporter domain; it reads MKGLQVAFKQ…QAMRPWQSFS (231 aa). Position 33 to 40 (33 to 40) interacts with ATP; that stretch reads GRSGAGKT. One can recognise a Mop domain in the interval 292-363; sequence KTSIRNIIEA…IKGVSVTQRD (72 aa).

Belongs to the ABC transporter superfamily. Molybdate importer (TC 3.A.1.8) family. As to quaternary structure, the complex is composed of two ATP-binding proteins (ModC), two transmembrane proteins (ModB) and a solute-binding protein (ModA).

The protein localises to the cell inner membrane. It carries out the reaction molybdate(out) + ATP + H2O = molybdate(in) + ADP + phosphate + H(+). Part of the ABC transporter complex ModABC involved in molybdenum import. Responsible for energy coupling to the transport system. This Vibrio vulnificus (strain YJ016) protein is Molybdenum import ATP-binding protein ModC.